A 248-amino-acid chain; its full sequence is Transcription factor bHLH35 (248 aa).

Over residues 37 to 54 (SGSYDSSSPDGAASSPAS) the composition is skewed to low complexity. The tract at residues 37–60 (SGSYDSSSPDGAASSPASKNIVSE) is disordered. Positions 51–100 (SPASKNIVSERNRRQKLNQRLFALRSVVPNITKMDKASIIKDAISYIEGL) constitute a bHLH domain.

As to quaternary structure, homodimer. In terms of tissue distribution, expressed constitutively in roots, leaves, stems, and flowers.

The protein resides in the nucleus. In Arabidopsis thaliana (Mouse-ear cress), this protein is Transcription factor bHLH35 (BHLH35).